Reading from the N-terminus, the 232-residue chain is Octanoyltransferase (232 aa).

Residues 44–219 (EYTADEIWVV…QLARQFGLVL (176 aa)) enclose the BPL/LPL catalytic domain. Residues 83-90 (RGGQVTYH), 150-152 (ALG), and 163-165 (GLS) each bind substrate. The active-site Acyl-thioester intermediate is Cys181.

This sequence belongs to the LipB family.

It localises to the cytoplasm. The catalysed reaction is octanoyl-[ACP] + L-lysyl-[protein] = N(6)-octanoyl-L-lysyl-[protein] + holo-[ACP] + H(+). It participates in protein modification; protein lipoylation via endogenous pathway; protein N(6)-(lipoyl)lysine from octanoyl-[acyl-carrier-protein]: step 1/2. Its function is as follows. Catalyzes the transfer of endogenously produced octanoic acid from octanoyl-acyl-carrier-protein onto the lipoyl domains of lipoate-dependent enzymes. Lipoyl-ACP can also act as a substrate although octanoyl-ACP is likely to be the physiological substrate. The protein is Octanoyltransferase of Xanthomonas axonopodis pv. citri (strain 306).